The primary structure comprises 181 residues: Probable mitochondrial import inner membrane translocase subunit tim-17B.1 (181 aa).

Helical transmembrane passes span 17-37 (IGSAFAMGLVGGSIFQAFGGY), 61-81 (GVQFAAWGGMFSTIDCCLVAI), and 109-129 (VMAGSAILGSVILAMIEGVGL). The tract at residues 137-181 (AMMDPTQPPPEALDDPRSLGQKSQAEPGLDQTRPFGIPTGLPNLS) is disordered.

The protein belongs to the Tim17/Tim22/Tim23 family.

It is found in the mitochondrion inner membrane. In terms of biological role, essential component of the TIM23 complex, a complex that mediates the translocation of transit peptide-containing proteins across the mitochondrial inner membrane. The polypeptide is Probable mitochondrial import inner membrane translocase subunit tim-17B.1 (Caenorhabditis elegans).